The following is a 344-amino-acid chain: MTNFYKVFLAVFILVCCNISQAAVSFIGSTENDVGPSLGSYSRTHAMDNLPFVYDTRNKIGYQNANVWHISKGFCVGLDGKVDLPVVGSLDGQSIYGLTEEVGLLIWMGDTKYSRGTAMSGNSWENVFSGWCVGANTASTQGLSVRVTPVILKRNSSARYSVQKTSIGSIRMRPYNGSSAGSVQTTVNFSLNPFTLNDTVTSCRLLTPSAVNVSLAAISAGQLPSSGDEVVAGTTSLKLQCDAGVTVWATLTDATTPSNRSDILTLTGASTATGVGLRIYKNTDSTPLKFGPDSPVKGNENQWQLSTGTETSPSVRLYVKYVNTGEGINPGTVNGISTFTFSYQ.

The N-terminal stretch at 1-22 (MTNFYKVFLAVFILVCCNISQA) is a signal peptide. The receptor-binding lectin domain stretch occupies residues 23–199 (AVSFIGSTEN…SLNPFTLNDT (177 aa)). A carbohydrate is bound by residues 65–66 (AN), 110–111 (DT), and 139–142 (STQG). The cysteines at positions 75 and 132 are disulfide-linked. Residues 200–344 (VTSCRLLTPS…GISTFTFSYQ (145 aa)) are fimbrillin-binding domain. Positions 288–308 (LKFGPDSPVKGNENQWQLSTG) are disordered. The span at 299–308 (NENQWQLSTG) shows a compositional bias: polar residues.

Belongs to the fimbrial protein family.

It is found in the fimbrium. Essential fimbrial adhesion factor that mediates binding to N-acetylglucosamine-containing receptors in the host intestinal microvilli, leading to colonization of the intestinal tissue, and diarrhea or septicemia. Also confers adhesiveness to laminin and basement membranes. This chain is F17a-G fimbrial adhesin (f17aG), found in Escherichia coli.